Reading from the N-terminus, the 204-residue chain is Large ribosomal subunit protein uL4 (204 aa).

The segment covering 42–55 (GSRQGSKAQKNRSA) has biased composition (polar residues). Residues 42–85 (GSRQGSKAQKNRSAVSGGGKRPWAQKGTGRARAGTTRGPIWRSG) form a disordered region. Residues 68–79 (GTGRARAGTTRG) are compositionally biased toward low complexity.

The protein belongs to the universal ribosomal protein uL4 family. Part of the 50S ribosomal subunit.

One of the primary rRNA binding proteins, this protein initially binds near the 5'-end of the 23S rRNA. It is important during the early stages of 50S assembly. It makes multiple contacts with different domains of the 23S rRNA in the assembled 50S subunit and ribosome. Its function is as follows. Forms part of the polypeptide exit tunnel. This is Large ribosomal subunit protein uL4 from Vesicomyosocius okutanii subsp. Calyptogena okutanii (strain HA).